Consider the following 199-residue polypeptide: MISGHNCLQVGQIAPDFSATAVYDQEFKTIKLSDFKNKYVILFFYPLDFTFVCPTEITAFSDKYSDFSELNTEILGVSVDSEYSHLAWLQTDRESGGLGDLEYPLVSDLKKEISIAYNVLNSGGVALRGLFIIDPKGIIQYSTVNNLEFGRSVEETLRVLQAIQYVQAHPDEVCPANWKPGDRTMNPDPIKSKNYFAAA.

The 158-residue stretch at Leu8–Tyr165 folds into the Thioredoxin domain. Catalysis depends on Cys53, which acts as the Cysteine sulfenic acid (-SOH) intermediate.

Belongs to the peroxiredoxin family. AhpC/Prx1 subfamily. As to quaternary structure, homodimer; disulfide-linked, upon oxidation. The Cys-53-SH group is the primary site of oxidation by H(2)O(2), and the oxidized Cys-53 (probably Cys-SOH) rapidly reacts with Cys-174-SH of the other subunit to form an intermolecular disulfide. This disulfide is subsequently reduced by thioredoxin.

It localises to the plastid. It is found in the chloroplast. It carries out the reaction a hydroperoxide + [thioredoxin]-dithiol = an alcohol + [thioredoxin]-disulfide + H2O. Its function is as follows. Thiol-specific peroxidase that catalyzes the reduction of hydrogen peroxide and organic hydroperoxides to water and alcohols, respectively. Plays a role in cell protection against oxidative stress by detoxifying peroxides. The chain is Putative peroxiredoxin ycf42 (ycf42) from Porphyra purpurea (Red seaweed).